The sequence spans 990 residues: Protein SUPPRESSOR OF MAX2 1 (990 aa).

Positions 8-167 (IQQTLTPEAA…KATIEQSLNN (160 aa)) constitute a Clp R domain. 2 repeat regions span residues 12–83 (LTPE…LERL) and 96–167 (ISNA…SLNN). A disordered region spans residues 818–855 (PKKEHGSGLSFDLNQAADTDDGSHNTSDLTTDNDQDEQ). An EAR motif is present at residues 828 to 832 (FDLNQ).

This sequence belongs to the ClpA/ClpB family. As to quaternary structure, interacts probably with TPL/TPR in an EAR-motif dependent manner. Interacts with TPL, TPR1, TPR2 and TPR4. As to expression, highly expressed in dry seeds. Expressed in seedlings, rosette leaves and senescing leaves. Detected in roots and axillary shoots. Expressed in the primary rosette buds and expanding leaves of adult rosettes, the vasculature of the hypocotyls, cotyledons, and mature roots, in the midvein and petioles of young leaves, the young leaf periphery, stomata, and the root caps.

Functionally, probable component of a transcriptional corepressor complex that acts downstream of MAX2 to negatively regulate karrikins/strigolactone responses. Probable target of MAX2 during germination and seedling photomorphogenesis. Acts probably specifically in the karrikin pathway. The protein is Protein SUPPRESSOR OF MAX2 1 of Arabidopsis thaliana (Mouse-ear cress).